Reading from the N-terminus, the 90-residue chain is Auxin-responsive protein SAUR24 (90 aa).

This sequence belongs to the ARG7 family.

Its subcellular location is the cell membrane. Its function is as follows. Functions as a positive effector of cell expansion through modulation of auxin transport. The sequence is that of Auxin-responsive protein SAUR24 from Arabidopsis thaliana (Mouse-ear cress).